A 487-amino-acid chain; its full sequence is L-tartrate/succinate antiporter (487 aa).

At 1–9 (MKPSTEWWR) the chain is on the periplasmic side. The chain crosses the membrane as a helical span at residues 10–30 (YLAPLAVIAIIALLPVPAGLE). Topologically, residues 31 to 32 (NH) are cytoplasmic. The next 2 helical transmembrane spans lie at 33–53 (TWLY…EPVP) and 54–74 (GAVV…WLLF). At 75 to 92 (SPEQLAQPGFKFTAKSLS) the chain is on the cytoplasmic side. The chain crosses the membrane as a helical span at residues 93–113 (WAVSGFSNSVIWLIFAAFMFG). Topologically, residues 114–136 (TGYEKTGLGRRIALILVKKMGHR) are periplasmic. A helical transmembrane segment spans residues 137–157 (TLFLGYAVMFSELILAPVTPS). The Cytoplasmic segment spans residues 158–188 (NSARGAGIIYPIIRNLPPLYQSQPNDSSSRS). A helical membrane pass occupies residues 189 to 209 (IGSYIMWMGIVADCVTSAIFL). Topologically, residues 210–235 (TAMAPNLLLIGLMKSASHATLSWGDW) are periplasmic. The chain crosses the membrane as a helical span at residues 236 to 256 (FLGMLPLSILLVLLVPWLAYV). Topologically, residues 257–291 (LYPPVLKSGDQVPRWAETELQAMGPLCSREKRMLG) are cytoplasmic. A run of 2 helical transmembrane segments spans residues 292–312 (LMVG…AAMV) and 313–333 (GYSV…DIVS). Residues 334-339 (NKAAWN) are Cytoplasmic-facing. The chain crosses the membrane as a helical span at residues 340–360 (VFFWLASLITLATGLNNTGFI). The Periplasmic segment spans residues 361–369 (SWFGKLLAG). The chain crosses the membrane as a helical span at residues 370 to 390 (SLSGYSPTMVMVALIVVFYLL). Over 391–392 (RY) the chain is Cytoplasmic. A helical transmembrane segment spans residues 393–413 (FFASATAYTSALAPMMIAAAL). The Periplasmic segment spans residues 414–417 (AMPE). A helical transmembrane segment spans residues 418-438 (IPLPVFCLMVGAAIGLGSILT). The Cytoplasmic portion of the chain corresponds to 439–464 (PYATGPSPIYYGSGYLPTADYWRLGA). A helical transmembrane segment spans residues 465–485 (IFGLIFLVLLVITGLLWMPVV). Residues 486-487 (LL) are Periplasmic-facing.

The protein belongs to the SLC13A/DASS transporter (TC 2.A.47) family. DIT1 subfamily.

It is found in the cell inner membrane. The catalysed reaction is (2R,3R)-tartrate(out) + succinate(in) = (2R,3R)-tartrate(in) + succinate(out). Functionally, catalyzes the uptake of tartrate in exchange for intracellular succinate. Essential for anaerobic L-tartrate fermentation. This chain is L-tartrate/succinate antiporter, found in Escherichia coli (strain K12).